Here is a 200-residue protein sequence, read N- to C-terminus: Ras-related protein Rab-7b (200 aa).

GTP contacts are provided by residues 15-22 (GALGVGKT), 34-40 (YEDYQTT), 63-67 (DTGGQ), 124-127 (NKID), and 154-155 (AK). 2 consecutive short sequence motifs (switch) follow at residues 28–41 (YVHK…QTTL) and 67–82 (QERF…KGSD). S186 carries the phosphoserine modification. S-geranylgeranyl cysteine attachment occurs at residues C199 and C200.

Belongs to the small GTPase superfamily. Rab family.

The protein localises to the late endosome. It localises to the lysosome. It is found in the golgi apparatus. The protein resides in the trans-Golgi network. Its subcellular location is the cytoplasmic vesicle. The protein localises to the phagosome. It localises to the phagosome membrane. Functionally, controls vesicular trafficking from endosomes to the trans-Golgi network (TGN). Acts as a negative regulator of TLR9 signaling and can suppress TLR9-triggered TNFA, IL6, and IFNB production in macrophages by promoting TLR9 lysosomal degradation. Also negatively regulates TLR4 signaling in macrophages by promoting lysosomal degradation of TLR4. Promotes megakaryocytic differentiation by increasing NF-kappa-B-dependent IL6 production and subsequently enhancing the association of STAT3 with GATA1. Not involved in the regulation of the EGF- and EGFR degradation pathway. The sequence is that of Ras-related protein Rab-7b (RAB7B) from Bos taurus (Bovine).